The sequence spans 396 residues: Glideosome-associated protein 50 (396 aa).

Residues Met1 to Arg369 lie on the Lumenal side of the membrane. A metal cation-binding residues include His195 and His256. Residues Val370–Phe390 form a helical membrane-spanning segment. Topologically, residues Leu391–Lys396 are cytoplasmic.

Belongs to the metallophosphoesterase superfamily. Purple acid phosphatase family. Component of the glideosome complex composed of GAP50, GAP45, MTIP and MyoA; the complex is formed during the late schizont stage and in merozoites. MyoA, MTIP and GAP45 probably form an initial complex in the cytoplasm which is then recruited to the outer face of the inner membrane complex via the interaction with GAP50. Interacts with GAP45; the interaction is independent of GAP45 phosphorylation status and can also occur independently of the formation of the glideosome complex. Interacts with human factor H isoform CFH (via sushi 6-7 domains) and isoform FHL-1 (via sushi 6-7 domains); the interaction occurs in the vector mosquito midgut at the surface of activated gametocytes; the interaction protects the parasite from alternative complement pathway-mediated elimination. It depends on a metal cation as a cofactor. In terms of processing, the N-terminus signal is likely to be cleaved.

It localises to the inner membrane complex. The protein localises to the cell membrane. The protein resides in the endoplasmic reticulum membrane. It catalyses the reaction a phosphate monoester + H2O = an alcohol + phosphate. Activity is independent of metal ions. Its function is as follows. Component of the glideosome complex, an inner membrane complex structure involved in parasite gliding motility and host cell invasion. During the asexual blood stage, may play a role in the assembly and anchoring of the glideosome complex to the inner membrane complex. During the sexual stage in the vector mosquito midgut, protects gametocytes against host alternative complement pathway-mediated elimination by interacting with host complement inhibitor factor H. Has phosphatase activity towards nucleotides such as ATP, vitamins B1 and B6, phosphorylated sugars, glycerol phosphates and inositol triphosphates. However, the phosphatase activity is controversial. In Plasmodium falciparum (isolate 3D7), this protein is Glideosome-associated protein 50.